An 807-amino-acid chain; its full sequence is Mechanosensitive cation channel TMEM63A (807 aa).

Over 1 to 51 (MMDSPFLELWQSKAVSIREQLGLGDRPNDSYCYNSAKNSTVLQGVTFGGIP) the chain is Extracellular. Asn-38 carries an N-linked (GlcNAc...) asparagine glycan. A helical transmembrane segment spans residues 52 to 74 (TVLLIDVSCFLFLILVFSIIRRR). Residues 75-134 (FWDYGRIALVSEADSESRFQRLSSTSSSGQQDFENELGCCPWLTAIFRLHDDQILEWCGE) are Cytoplasmic-facing. The helical transmembrane segment at 135 to 167 (DAIHYLSFQRHIIFLLVVVSFLSLCVILPVNLS) threads the bilayer. Residues 168 to 191 (GDLLDKDPYSFGRTTIANLQTDND) are Extracellular-facing. Residues 192-217 (LLWLHTIFAVIYLFLTVGFMRHHTQS) form a helical membrane-spanning segment. The Cytoplasmic segment spans residues 218–416 (IKYKEENLVR…CWKNLSIQGL (199 aa)). An intracellular linker IL2; confers mechanosensitivity region spans residues 219–414 (KYKEENLVRR…DICWKNLSIQ (196 aa)). A helical membrane pass occupies residues 417–444 (RWWLQWLGINFTLFLGLFFLTTPSIILS). Over 445 to 462 (TMDKFNVTKPIHALNNPI) the chain is Extracellular. A glycan (N-linked (GlcNAc...) asparagine) is linked at Asn-450. A helical transmembrane segment spans residues 463-490 (ISQFFPTLLLWSFSALLPSIVYYSTLLE). At 491-495 (SHWTK) the chain is on the cytoplasmic side. A helical membrane pass occupies residues 496–532 (SGENQIMMTKVYIFLIFMVLILPSLGLTSLDFFFRWL). Topologically, residues 533–554 (FDKTSSEASIRLECVFLPDQGA) are extracellular. Residues 555–586 (FFVNYVIASAFIGNGMELLRLPGLILYTFRMI) form a helical membrane-spanning segment. The gating helix stretch occupies residues 555 to 586 (FFVNYVIASAFIGNGMELLRLPGLILYTFRMI). Residues 587–606 (MAKTAADRRNVKQNQAFQYE) are Cytoplasmic-facing. A helical transmembrane segment spans residues 607–624 (FGAMYAWMLCVFTVIVAY). At 625–628 (SITC) the chain is on the extracellular side. The helical transmembrane segment at 629-651 (PIIAPFGLIYILLKHMVDRHNLY) threads the bilayer. The Cytoplasmic segment spans residues 652–661 (FVYLPAKLEK). Residues 662-689 (GIHFAAVNQALAAPILCLFWLYFFSFLR) form a helical membrane-spanning segment. The Extracellular portion of the chain corresponds to 690 to 694 (LGMKA). Residues 695-709 (PATLFTFLVLLLTIL) traverse the membrane as a helical segment. Residues 710–807 (VCLAHTCFGC…GSVAAAPQEA (98 aa)) are Cytoplasmic-facing. Position 739 is a phosphoserine (Ser-739).

It belongs to the CSC1 (TC 1.A.17) family. Monomer. Post-translationally, N-Glycosylated.

It localises to the lysosome membrane. The protein resides in the early endosome membrane. The protein localises to the cell membrane. The enzyme catalyses Ca(2+)(in) = Ca(2+)(out). Mechanosensitive cation channel with low conductance and high activation threshold. In contrast to TMEM63B, does not show phospholipid scramblase activity. Acts as a regulator of lysosomal morphology by mediating lysosomal mechanosensitivity. Important for the baby's first breath and respiration throughout life. Upon lung inflation conducts cation currents in alveolar type 1 and 2 cells triggering lamellar body exocytosis and surfactant secretion into airspace. Also acts as an osmosensitive cation channel preferentially activated by hypotonic stress. The protein is Mechanosensitive cation channel TMEM63A of Homo sapiens (Human).